Reading from the N-terminus, the 168-residue chain is Endoribonuclease YbeY (168 aa).

3 residues coordinate Zn(2+): H122, H126, and H132.

The protein belongs to the endoribonuclease YbeY family. Requires Zn(2+) as cofactor.

It is found in the cytoplasm. In terms of biological role, single strand-specific metallo-endoribonuclease involved in late-stage 70S ribosome quality control and in maturation of the 3' terminus of the 16S rRNA. The chain is Endoribonuclease YbeY from Brucella abortus (strain 2308).